Here is a 191-residue protein sequence, read N- to C-terminus: Shikimate kinase (191 aa).

24 to 29 lines the ATP pocket; it reads GSGKTS. Thr28 is a Mg(2+) binding site. 3 residues coordinate substrate: Asp46, Arg70, and Gly92. Residue Arg130 coordinates ATP. Arg149 contacts substrate.

The protein belongs to the shikimate kinase family. Monomer. Requires Mg(2+) as cofactor.

It localises to the cytoplasm. The catalysed reaction is shikimate + ATP = 3-phosphoshikimate + ADP + H(+). Its pathway is metabolic intermediate biosynthesis; chorismate biosynthesis; chorismate from D-erythrose 4-phosphate and phosphoenolpyruvate: step 5/7. Its function is as follows. Catalyzes the specific phosphorylation of the 3-hydroxyl group of shikimic acid using ATP as a cosubstrate. This chain is Shikimate kinase, found in Synechococcus sp. (strain CC9902).